Reading from the N-terminus, the 423-residue chain is AP-1 complex subunit mu-2 (423 aa).

The 254-residue stretch at 168–421 (KNEVFIDVIE…ITQSGDYQLR (254 aa)) folds into the MHD domain.

This sequence belongs to the adaptor complexes medium subunit family. In terms of assembly, adaptor protein complex 1 (AP-1) is a heterotetramer composed of two large adaptins (gamma-type subunit AP1G1 and beta-type subunit AP1B1), a medium adaptin (mu-type subunit AP1M1 or AP1M2) and a small adaptin (sigma-type subunit AP1S1 or AP1S2 or AP1S3). Interacts with P2X4. In terms of processing, phosphorylation of membrane-bound AP1M1/AP1M2 increases its affinity for sorting signals.

Its subcellular location is the golgi apparatus. The protein resides in the cytoplasmic vesicle. It is found in the clathrin-coated vesicle membrane. Its function is as follows. Subunit of clathrin-associated adaptor protein complex 1 that plays a role in protein sorting in the trans-Golgi network (TGN) and endosomes. The AP complexes mediate the recruitment of clathrin to membranes and the recognition of sorting signals within the cytosolic tails of transmembrane cargo molecules. This Mus musculus (Mouse) protein is AP-1 complex subunit mu-2 (Ap1m2).